A 248-amino-acid polypeptide reads, in one-letter code: Protein canopy homolog 4 (248 aa).

Residues 1–21 (MGPVRLGILLFLFLAVHEAWA) form the signal peptide. 3 disulfide bridges follow: Cys38-Cys196, Cys41-Cys184, and Cys94-Cys156. Residues 200–248 (TWTGKEITDGEEKTEGEEEQEEEEEEEEEEGGDKMTKTGSHPKLDREDL) are disordered. Positions 213-230 (TEGEEEQEEEEEEEEEEG) are enriched in acidic residues. Over residues 231-248 (GDKMTKTGSHPKLDREDL) the composition is skewed to basic and acidic residues.

This sequence belongs to the canopy family. As to quaternary structure, interacts with TLR4.

The protein resides in the secreted. Functionally, plays a role in the regulation of the cell surface expression of TLR4. The sequence is that of Protein canopy homolog 4 (CNPY4) from Homo sapiens (Human).